Consider the following 391-residue polypeptide: Phosphoglycerate kinase (391 aa).

Residues 21-23, Arg36, 59-62, Arg114, and Arg147 contribute to the substrate site; these read DLN and HLGR. ATP-binding positions include Lys198, Glu315, and 344 to 347; that span reads GGDT.

The protein belongs to the phosphoglycerate kinase family. Monomer.

It localises to the cytoplasm. It carries out the reaction (2R)-3-phosphoglycerate + ATP = (2R)-3-phospho-glyceroyl phosphate + ADP. It functions in the pathway carbohydrate degradation; glycolysis; pyruvate from D-glyceraldehyde 3-phosphate: step 2/5. This Actinobacillus pleuropneumoniae serotype 5b (strain L20) protein is Phosphoglycerate kinase.